We begin with the raw amino-acid sequence, 175 residues long: uncharacterized protein (175 aa).

Positions 1–10 (MSKKINNNKT) are enriched in polar residues. Positions 1 to 21 (MSKKINNNKTPRNKVKNNNVS) are disordered.

This is an uncharacterized protein from Ureaplasma parvum serovar 3 (strain ATCC 700970).